A 1374-amino-acid polypeptide reads, in one-letter code: Major capsid protein (1374 aa).

It belongs to the herpesviridae major capsid protein family. Homomultimer. Makes the hexons and eleven out of twelve pentons. Interacts with triplex proteins 1/TRX1 and 2/TRX2; adjacent capsomers are linked together in groups of three by triplexes, heterotrimeric complexes composed of one molecule of TRX1 and two molecules of TRX2. Interacts with scaffold protein; this interaction allows efficient MCP transport to the host nucleus. Interacts with capsid vertex component 2/CVC2. Interacts with the small capsomere-interacting protein/SCP.

The protein localises to the virion. It is found in the host nucleus. In terms of biological role, self-assembles to form an icosahedral capsid with a T=16 symmetry, about 200 nm in diameter, and consisting of 150 hexons and 12 pentons (total of 162 capsomers). Hexons form the edges and faces of the capsid and are each composed of six MCP molecules. In contrast, one penton is found at each of the 12 vertices. Eleven of the pentons are MCP pentamers, while the last vertex is occupied by the portal complex. The capsid is surrounded by a layer of proteinaceous material designated the tegument which, in turn, is enclosed in an envelope of host cell-derived lipids containing virus-encoded glycoproteins. The protein is Major capsid protein of Homo sapiens (Human).